The chain runs to 151 residues: Calcium-binding protein SPEC 2C (151 aa).

EF-hand domains are found at residues 10–45 (EQRK…IEIE), 46–78 (LTQE…KAEQ), 81–116 (GKGA…CTDP), and 118–151 (MTKE…QSSY). Ca(2+) is bound by residues aspartate 23, aspartate 25, aspartate 27, lysine 29, glutamate 34, aspartate 59, aspartate 61, serine 63, glutamate 70, aspartate 94, aspartate 96, serine 98, serine 100, glutamate 105, aspartate 131, aspartate 135, glutamate 137, and glutamate 142.

As to expression, found in cell lineages giving rise to the aboral ectoderm, a squamous epithelium covering the surface of the late stage embryo and larva.

Its function is as follows. Calcium-binding protein involved in larval development and metamorphosis. Likely to function as calcium buffers mediating the transport of calcium from the sea water to the blastocoel where calcium is required for skeleton formation. The protein is Calcium-binding protein SPEC 2C (SPEC2C) of Strongylocentrotus purpuratus (Purple sea urchin).